Here is a 287-residue protein sequence, read N- to C-terminus: Probable glucose uptake protein GlcU (287 aa).

A run of 9 helical transmembrane segments spans residues 7 to 29 (LIAL…VGGG), 34 to 56 (IRGT…HAAF), 58 to 75 (NLTV…WAFG), 114 to 136 (WSTI…GISL), 156 to 178 (MGIL…IFGV), 183 to 202 (ALFF…SMNH), 209 to 228 (TALN…FMFY), 233 to 255 (VGVA…GGIF), and 267 to 286 (IGIW…LGNL).

The protein belongs to the GRP transporter (TC 2.A.7.5) family.

Its subcellular location is the cell membrane. Functionally, involved in the uptake of glucose. In Staphylococcus epidermidis (strain ATCC 35984 / DSM 28319 / BCRC 17069 / CCUG 31568 / BM 3577 / RP62A), this protein is Probable glucose uptake protein GlcU (glcU).